We begin with the raw amino-acid sequence, 510 residues long: MNFLHFLTTSLLLLGGSRLALADSASSAIKIKGNAFFNSDTNERFYVRGVDYQPGGSSTLVDPLADTSICKRDLPYLQGLNINTIRVYQVDNSANHDECMSALQDAGIYVILDLATSSNSISRLDAASSYNAVFLQGIFATIDAFKNYTNVLGFFAGNEVANTAENSATTTWVKAALRDAKEYISKNSDRDIPVGYSAADVAEIRVQCADFFACGNSSVRADFYGMNMYEWCGADSSFTISGYDQRMEEFANYSIPLFLSEYGCNDVTKESDGTPDRPFDEVDAIFSSEMSSVFSGGLVYQYSEEGNNYGLVVIDGDNVTISKNYETLKEKYASAANYTGDGDYSSSPATLTCPADDSYFTSFPLPTMPSEAKGFIESGAGQPLGFNAPSNQEFSANATALVSPGPHSVSTTINTNIVQATISQSSTSGSSSGSSSASTTASSSSVSSGSSISSGSSSMSTSYTSASGSSAHSSGSSSGSSSATSSASTFNLSRFYVFAGILAISGLVFA.

Positions 1 to 22 (MNFLHFLTTSLLLLGGSRLALA) are cleaved as a signal peptide. The cysteines at positions 70 and 99 are disulfide-linked. Tyr-88 contributes to the (1,3-beta-D-glucosyl)n binding site. Asn-147 is a glycosylation site (N-linked (GlcNAc...) asparagine). (1,3-beta-D-glucosyl)n contacts are provided by Asn-158, Glu-159, Asp-200, and Arg-205. Glu-159 serves as the catalytic Proton donor. 2 disulfides stabilise this stretch: Cys-214–Cys-353 and Cys-232–Cys-264. Residues Asn-216 and Asn-252 are each glycosylated (N-linked (GlcNAc...) asparagine). Glu-261 functions as the Nucleophile in the catalytic mechanism. Position 300 (Tyr-300) interacts with (1,3-beta-D-glucosyl)n. N-linked (GlcNAc...) asparagine glycosylation is found at Asn-318, Asn-337, and Asn-397. The segment at 424-456 (QSSTSGSSSGSSSASTTASSSSVSSGSSISSGS) is disordered. The GPI-anchor amidated serine moiety is linked to residue Ser-485. Positions 486–510 (SASTFNLSRFYVFAGILAISGLVFA) are cleaved as a propeptide — removed in mature form. Asn-491 carries N-linked (GlcNAc...) asparagine glycosylation.

Belongs to the glycosyl hydrolase 72 family. The GPI-anchor is attached to the protein in the endoplasmic reticulum and serves to target the protein to the cell surface. There, the glucosamine-inositol phospholipid moiety is cleaved off and the GPI-modified mannoprotein is covalently attached via its lipidless GPI glycan remnant to the 1,6-beta-glucan of the outer cell wall layer.

The protein localises to the secreted. Its subcellular location is the cell wall. The protein resides in the membrane. Its function is as follows. Splits internally a 1,3-beta-glucan molecule and transfers the newly generated reducing end (the donor) to the non-reducing end of another 1,3-beta-glucan molecule (the acceptor) forming a 1,3-beta linkage, resulting in the elongation of 1,3-beta-glucan chains in the cell wall. The polypeptide is 1,3-beta-glucanosyltransferase gas5 (gas5) (Schizosaccharomyces pombe (strain 972 / ATCC 24843) (Fission yeast)).